We begin with the raw amino-acid sequence, 600 residues long: Melanophilin (600 aa).

One can recognise a RabBD domain in the interval 4–124 (KLDLSKLTDE…IGSLEWYYEH (121 aa)). Residues 64 to 107 (CARCLQPYQLLVNSKRQCLECGLFTCKSCGRVHPEEQGWICDPC) form an FYVE-type zinc finger. 4 disordered regions span residues 146–277 (QGGA…AELC), 390–465 (EELT…LSEL), 499–541 (TVKP…AKAM), and 553–600 (NSLK…AHQS). Basic and acidic residues-rich tracts occupy residues 232–243 (CSEKAAPHKAEG) and 409–420 (KDEKAEPNRDKS). Residues 373–496 (GVRTEADVEE…ESRIAALRAA (124 aa)) adopt a coiled-coil conformation. Basic and acidic residues predominate over residues 558–569 (QGKDDDSFDRKS).

As to quaternary structure, binds RAB27A that has been activated by GTP-binding via its N-terminus. Binds MYO5A via its C-terminal coiled coil domain.

Its subcellular location is the cytoplasm. Its function is as follows. Rab effector protein involved in melanosome transport. Serves as link between melanosome-bound RAB27A and the motor protein MYO5A. In Homo sapiens (Human), this protein is Melanophilin (MLPH).